A 1059-amino-acid polypeptide reads, in one-letter code: Translation initiation factor IF-2 (1059 aa).

2 stretches are compositionally biased toward polar residues: residues 55 to 75 (LPHSPSLSAAPEKSNSQNQDS) and 107 to 126 (KINNNLVTTPPNTSVLNNQV). 3 disordered regions span residues 55–81 (LPHSPSLSAAPEKSNSQNQDSGIGYNE), 93–394 (PKPL…RLRL), and 418–468 (SLSL…QSAE). Positions 178-187 (DSNEKSKVEV) are enriched in basic and acidic residues. A compositionally biased stretch (polar residues) spans 202–211 (LNRNLRNTGV). Basic residues predominate over residues 216–229 (QKNKKPKQEGKKRK). Composition is skewed to basic and acidic residues over residues 230 to 252 (DKEEKPFEKPAIVSKKENKDTSI) and 259 to 273 (SKKENKDTFQNRESV). A compositionally biased stretch (polar residues) spans 274–284 (KTSASDTSSQL). 2 stretches are compositionally biased toward basic and acidic residues: residues 291–300 (KPTVKLKQEQ) and 359–368 (LTKDKKVSKW). Residues 452 to 463 (SHESVQSESNEQ) are compositionally biased toward low complexity. Residues 556–733 (RRPPVVTIMG…EVEDLQANPE (178 aa)) enclose the tr-type G domain. Residues 565-572 (GHVDHGKT) are G1. 565 to 572 (GHVDHGKT) contributes to the GTP binding site. Residues 590-594 (GITQH) are G2. The tract at residues 615–618 (DTPG) is G3. Residues 615–619 (DTPGH) and 669–672 (NKID) contribute to the GTP site. The G4 stretch occupies residues 669–672 (NKID). The segment at 705–707 (SAI) is G5.

This sequence belongs to the TRAFAC class translation factor GTPase superfamily. Classic translation factor GTPase family. IF-2 subfamily.

The protein resides in the cytoplasm. Functionally, one of the essential components for the initiation of protein synthesis. Protects formylmethionyl-tRNA from spontaneous hydrolysis and promotes its binding to the 30S ribosomal subunits. Also involved in the hydrolysis of GTP during the formation of the 70S ribosomal complex. The protein is Translation initiation factor IF-2 of Trichodesmium erythraeum (strain IMS101).